We begin with the raw amino-acid sequence, 353 residues long: THUMP domain-containing protein 1 (353 aa).

Over residues 1–10 (MAAPAQQTTQ) the composition is skewed to polar residues. Disordered regions lie at residues 1-20 (MAAPAQQTTQPGGGKRKGKA) and 73-96 (YGPEKFTDKDQQPSGSEGEDDDAE). Position 2 is an N-acetylalanine (A2). The residue at position 79 (T79) is a Phosphothreonine. S86, S88, and S119 each carry phosphoserine. Positions 147-254 (DMYKTKKKKT…KAVCCLSVVK (108 aa)) constitute a THUMP domain. S270 carries the phosphoserine modification. Positions 270-353 (SPKDPSQLNS…GSKSNENDFS (84 aa)) are disordered. Over residues 273-282 (DPSQLNSKQG) the composition is skewed to polar residues. The span at 283–296 (NGKEAKLESADKSD) shows a compositional bias: basic and acidic residues. A compositionally biased stretch (polar residues) spans 297 to 327 (QNNTAEGKNNQQVPENTEELGQTKPTSNPQV).

It belongs to the THUMPD1 family. As to quaternary structure, interacts with NAT10. Binds tRNA.

In terms of biological role, functions as a tRNA-binding adapter to mediate NAT10-dependent tRNA acetylation modifying cytidine to N4-acetylcytidine (ac4C). This chain is THUMP domain-containing protein 1 (THUMPD1), found in Homo sapiens (Human).